The following is a 660-amino-acid chain: Polyadenylate-binding protein 3 (660 aa).

4 RRM domains span residues 49–126 (SSLY…LSNR), 136–213 (GNIF…HFIR), 229–306 (TNVY…RAQK), and 332–409 (ANLY…LAQR). Residues 571-648 (PISKLTSSLA…ALDVLRLSVD (78 aa)) form the PABC domain.

This sequence belongs to the polyadenylate-binding protein type-1 family. Expressed predominantly in immature flowers. Detected in tapetum and pollen. Strongly expressed in immatures siliques.

It is found in the cytoplasm. It localises to the nucleus. Its function is as follows. Binds the poly(A) tail of mRNA. Appears to be an important mediator of the multiple roles of the poly(A) tail in mRNA biogenesis, stability and translation. In the cytoplasm, affects both translation and mRNA decay. Inhibits the polyadenylated RNA degradation by the Rrp41p 3'--&gt;5' exonuclease in vitro. Binds with the 5'UTRs of PAB2, PAB3 and with a lower affinity with the 5'UTR of PAB5. The sequence is that of Polyadenylate-binding protein 3 (PAB3) from Arabidopsis thaliana (Mouse-ear cress).